A 70-amino-acid polypeptide reads, in one-letter code: Large ribosomal subunit protein eL38 (70 aa).

Residue Lys-4 forms a Glycyl lysine isopeptide (Lys-Gly) (interchain with G-Cter in SUMO2) linkage. An N6-acetyllysine; alternate modification is found at Lys-9. Residue Lys-9 forms a Glycyl lysine isopeptide (Lys-Gly) (interchain with G-Cter in SUMO2); alternate linkage. An N6-acetyllysine modification is found at Lys-67.

It belongs to the eukaryotic ribosomal protein eL38 family. Component of the large ribosomal subunit.

The protein resides in the cytoplasm. In terms of biological role, component of the large ribosomal subunit. The ribosome is a large ribonucleoprotein complex responsible for the synthesis of proteins in the cell. This chain is Large ribosomal subunit protein eL38 (RPL38), found in Homo sapiens (Human).